The primary structure comprises 557 residues: Aerobic glycerol-3-phosphate dehydrogenase (557 aa).

21-49 contributes to the FAD binding site; sequence DLVIIGGGITGAGIALDASERGMKVALVE.

This sequence belongs to the FAD-dependent glycerol-3-phosphate dehydrogenase family. It depends on FAD as a cofactor.

The protein resides in the cytoplasm. It catalyses the reaction a quinone + sn-glycerol 3-phosphate = dihydroxyacetone phosphate + a quinol. It functions in the pathway polyol metabolism; glycerol degradation via glycerol kinase pathway; glycerone phosphate from sn-glycerol 3-phosphate (aerobic route): step 1/1. In Staphylococcus aureus (strain MRSA252), this protein is Aerobic glycerol-3-phosphate dehydrogenase (glpD).